A 234-amino-acid polypeptide reads, in one-letter code: Segregation and condensation protein A (234 aa).

This sequence belongs to the ScpA family. In terms of assembly, component of a cohesin-like complex composed of ScpA, ScpB and the Smc homodimer, in which ScpA and ScpB bind to the head domain of Smc. The presence of the three proteins is required for the association of the complex with DNA.

It localises to the cytoplasm. Its function is as follows. Participates in chromosomal partition during cell division. May act via the formation of a condensin-like complex containing Smc and ScpB that pull DNA away from mid-cell into both cell halves. This Streptococcus pyogenes serotype M3 (strain ATCC BAA-595 / MGAS315) protein is Segregation and condensation protein A.